Consider the following 153-residue polypeptide: uncharacterized protein (153 aa).

2 disordered regions span residues 24 to 87 and 101 to 153; these read PEDS…DRPL and GDPR…RIPS. The span at 27–37 shows a compositional bias: low complexity; it reads SSCPCPRLPLS. Positions 143 to 153 are enriched in basic and acidic residues; it reads TRKESSCRIPS.

This is an uncharacterized protein from Dryophytes versicolor (chameleon treefrog).